A 220-amino-acid chain; its full sequence is Large ribosomal subunit protein uL1 (220 aa).

The protein belongs to the universal ribosomal protein uL1 family. As to quaternary structure, part of the 50S ribosomal subunit.

Its function is as follows. Binds directly to 23S rRNA. The L1 stalk is quite mobile in the ribosome, and is involved in E site tRNA release. Functionally, protein L1 is also a translational repressor protein, it controls the translation of the L11 operon by binding to its mRNA. The protein is Large ribosomal subunit protein uL1 of Ehrlichia canis (strain Jake).